The following is a 599-amino-acid chain: Sulfite reductase [NADPH] flavoprotein alpha-component (599 aa).

A Flavodoxin-like domain is found at 64–202; sequence VTLISASQTG…AASEWRARVV (139 aa). FMN-binding positions include 70-75, 117-120, and 153-162; these read SQTGNA, STQG, and LGDTSYEFFC. In terms of domain architecture, FAD-binding FR-type spans 234–448; that stretch reads DAPLIATLSV…IEHNDNFRLP (215 aa). Residues Thr322, Ala356, 386–389, 404–406, Tyr410, and 419–422 each bind FAD; these read RLYS, TVG, and GGAS. NADP(+) contacts are provided by residues 519 to 520, 525 to 529, and Asp561; these read SR and KIYVQ. Residue Tyr599 participates in FAD binding.

It belongs to the NADPH-dependent sulphite reductase flavoprotein subunit CysJ family. This sequence in the N-terminal section; belongs to the flavodoxin family. The protein in the C-terminal section; belongs to the flavoprotein pyridine nucleotide cytochrome reductase family. In terms of assembly, alpha(8)-beta(8). The alpha component is a flavoprotein, the beta component is a hemoprotein. FAD serves as cofactor. FMN is required as a cofactor.

It carries out the reaction hydrogen sulfide + 3 NADP(+) + 3 H2O = sulfite + 3 NADPH + 4 H(+). Its pathway is sulfur metabolism; hydrogen sulfide biosynthesis; hydrogen sulfide from sulfite (NADPH route): step 1/1. Component of the sulfite reductase complex that catalyzes the 6-electron reduction of sulfite to sulfide. This is one of several activities required for the biosynthesis of L-cysteine from sulfate. The flavoprotein component catalyzes the electron flow from NADPH -&gt; FAD -&gt; FMN to the hemoprotein component. In Salmonella typhimurium (strain LT2 / SGSC1412 / ATCC 700720), this protein is Sulfite reductase [NADPH] flavoprotein alpha-component.